Reading from the N-terminus, the 347-residue chain is Phosphate acyltransferase (347 aa).

This sequence belongs to the PlsX family. As to quaternary structure, homodimer. Probably interacts with PlsY.

The protein resides in the cytoplasm. The enzyme catalyses a fatty acyl-[ACP] + phosphate = an acyl phosphate + holo-[ACP]. It participates in lipid metabolism; phospholipid metabolism. Catalyzes the reversible formation of acyl-phosphate (acyl-PO(4)) from acyl-[acyl-carrier-protein] (acyl-ACP). This enzyme utilizes acyl-ACP as fatty acyl donor, but not acyl-CoA. The sequence is that of Phosphate acyltransferase from Syntrophotalea carbinolica (strain DSM 2380 / NBRC 103641 / GraBd1) (Pelobacter carbinolicus).